The following is a 159-amino-acid chain: Phosphopantetheine adenylyltransferase (159 aa).

Substrate is bound at residue Thr-9. Residues 9-10 and His-17 contribute to the ATP site; that span reads TF. Substrate contacts are provided by Lys-41, Leu-73, and Arg-87. ATP contacts are provided by residues 88-90, Glu-98, and 123-129; these read GLR and YMFISAT.

The protein belongs to the bacterial CoaD family. As to quaternary structure, homohexamer. Mg(2+) serves as cofactor.

Its subcellular location is the cytoplasm. The enzyme catalyses (R)-4'-phosphopantetheine + ATP + H(+) = 3'-dephospho-CoA + diphosphate. The protein operates within cofactor biosynthesis; coenzyme A biosynthesis; CoA from (R)-pantothenate: step 4/5. Reversibly transfers an adenylyl group from ATP to 4'-phosphopantetheine, yielding dephospho-CoA (dPCoA) and pyrophosphate. This Nitrosomonas europaea (strain ATCC 19718 / CIP 103999 / KCTC 2705 / NBRC 14298) protein is Phosphopantetheine adenylyltransferase.